The sequence spans 82 residues: Small ribosomal subunit protein eS27 (82 aa).

The C4-type zinc-finger motif lies at 37-59; it reads CPGCFTITTVFSHAQTVVICQGC.

The protein belongs to the eukaryotic ribosomal protein eS27 family. Component of the small ribosomal subunit (SSU). Mature N.crassa ribosomes consist of a small (40S) and a large (60S) subunit. The 40S small subunit contains 1 molecule of ribosomal RNA (18S rRNA) and at least 32 different proteins. The large 60S subunit contains 3 rRNA molecules (26S, 5.8S and 5S rRNA) and at least 42 different proteins. Zn(2+) serves as cofactor.

Its subcellular location is the cytoplasm. Its function is as follows. Component of the ribosome, a large ribonucleoprotein complex responsible for the synthesis of proteins in the cell. The small ribosomal subunit (SSU) binds messenger RNAs (mRNAs) and translates the encoded message by selecting cognate aminoacyl-transfer RNA (tRNA) molecules. The large subunit (LSU) contains the ribosomal catalytic site termed the peptidyl transferase center (PTC), which catalyzes the formation of peptide bonds, thereby polymerizing the amino acids delivered by tRNAs into a polypeptide chain. The nascent polypeptides leave the ribosome through a tunnel in the LSU and interact with protein factors that function in enzymatic processing, targeting, and the membrane insertion of nascent chains at the exit of the ribosomal tunnel. This is Small ribosomal subunit protein eS27 (crp-6) from Neurospora crassa (strain ATCC 24698 / 74-OR23-1A / CBS 708.71 / DSM 1257 / FGSC 987).